The sequence spans 200 residues: Putative glucose-6-phosphate isomerase 2 (200 aa).

Positions 92, 94, 101, and 140 each coordinate Fe cation.

It belongs to the archaeal-type GPI family. In terms of assembly, homodimer. Fe cation serves as cofactor.

It is found in the cytoplasm. It carries out the reaction alpha-D-glucose 6-phosphate = beta-D-fructose 6-phosphate. It functions in the pathway carbohydrate degradation; glycolysis; D-glyceraldehyde 3-phosphate and glycerone phosphate from D-glucose: step 2/4. This chain is Putative glucose-6-phosphate isomerase 2 (pgiA2), found in Rhizobium meliloti (strain 1021) (Ensifer meliloti).